The chain runs to 535 residues: Ribonuclease Y (535 aa).

A helical transmembrane segment spans residues 4 to 24; it reads IILLIVSALIGLILGYALISI. The interval 118 to 141 is disordered; that stretch reads ENLSSKEKVLDSKEQSLTDKSKHI. The KH domain maps to 225–285; sequence TITSVHLPDD…IRREIARMTL (61 aa). In terms of domain architecture, HD spans 351–444; that stretch reads VLRHSVEVGK…VAAADALSSA (94 aa).

It belongs to the RNase Y family.

Its subcellular location is the cell membrane. Its function is as follows. Endoribonuclease that initiates mRNA decay. In Streptococcus pyogenes serotype M1, this protein is Ribonuclease Y.